A 263-amino-acid chain; its full sequence is MVAAVARLWWRGLLGASALTRGAGRPSVLLLPVRRESAGADTRPTVRPRNDVAHKQLSAFGEYVAEILPKYVQQVQVSCFNELEVCIHPDGVIPVLTFLRDHTNAQFKSLVDLTAVDVPTRQNRFEIVYNLLSLRFNSRIRVKTYTDELTPIESAVSVFKAANWYEREIWDMFGVFFANHPDLRRILTDYGFEGHPFRKDFPLSGYVELRYDDEVKRVVAEPVELAQEFRKFDLNSPWEAFPVYRQPPESLKLEAGDKKPDAK.

The N-terminal 35 residues, 1–35, are a transit peptide targeting the mitochondrion; sequence MVAAVARLWWRGLLGASALTRGAGRPSVLLLPVRR.

This sequence belongs to the complex I 30 kDa subunit family. Core subunit of respiratory chain NADH dehydrogenase (Complex I) which is composed of 45 different subunits. Interacts with NDUFAF3. Interacts with RAB5IF. Found in subcomplexes containing subunits NDUFS2, MT-ND1 and NDUFA13.

Its subcellular location is the mitochondrion inner membrane. The catalysed reaction is a ubiquinone + NADH + 5 H(+)(in) = a ubiquinol + NAD(+) + 4 H(+)(out). Its function is as follows. Core subunit of the mitochondrial membrane respiratory chain NADH dehydrogenase (Complex I) which catalyzes electron transfer from NADH through the respiratory chain, using ubiquinone as an electron acceptor. Essential for the catalytic activity and assembly of complex I. The polypeptide is NADH dehydrogenase [ubiquinone] iron-sulfur protein 3, mitochondrial (NDUFS3) (Gorilla gorilla gorilla (Western lowland gorilla)).